A 308-amino-acid chain; its full sequence is Oxygen-dependent coproporphyrinogen-III oxidase (308 aa).

Serine 92 lines the substrate pocket. A divalent metal cation contacts are provided by histidine 96 and histidine 106. Histidine 106 serves as the catalytic Proton donor. 108–110 (NVR) serves as a coordination point for substrate. A divalent metal cation contacts are provided by histidine 145 and histidine 175. The important for dimerization stretch occupies residues 240–275 (YVEFNLVWDRGTLFGLQTGGRTESILMSMPPLVRWE). 258–260 (GGR) is a binding site for substrate.

It belongs to the aerobic coproporphyrinogen-III oxidase family. Homodimer. It depends on a divalent metal cation as a cofactor.

The protein localises to the cytoplasm. The enzyme catalyses coproporphyrinogen III + O2 + 2 H(+) = protoporphyrinogen IX + 2 CO2 + 2 H2O. It participates in porphyrin-containing compound metabolism; protoporphyrin-IX biosynthesis; protoporphyrinogen-IX from coproporphyrinogen-III (O2 route): step 1/1. In terms of biological role, involved in the heme biosynthesis. Catalyzes the aerobic oxidative decarboxylation of propionate groups of rings A and B of coproporphyrinogen-III to yield the vinyl groups in protoporphyrinogen-IX. This is Oxygen-dependent coproporphyrinogen-III oxidase from Salmonella paratyphi A (strain ATCC 9150 / SARB42).